The primary structure comprises 207 residues: Large ribosomal subunit protein uL4 (207 aa).

Residues serine 48–valine 89 form a disordered region. Positions glycine 60–glycine 71 are enriched in basic residues.

Belongs to the universal ribosomal protein uL4 family. As to quaternary structure, part of the 50S ribosomal subunit.

One of the primary rRNA binding proteins, this protein initially binds near the 5'-end of the 23S rRNA. It is important during the early stages of 50S assembly. It makes multiple contacts with different domains of the 23S rRNA in the assembled 50S subunit and ribosome. Functionally, forms part of the polypeptide exit tunnel. This Bacillus velezensis (strain DSM 23117 / BGSC 10A6 / LMG 26770 / FZB42) (Bacillus amyloliquefaciens subsp. plantarum) protein is Large ribosomal subunit protein uL4.